Here is a 543-residue protein sequence, read N- to C-terminus: MSNITKKSLIAAGILTALIAASAATAADVPAGVQLADKQTLVRNNGSEVQSLDPHKIEGVPESNVSRDLFEGLLISDVEGHPSPGVAEKWENKDFKVWTFHLRENAKWSDGTPVTAHDFVYSWQRLADPNTASPYASYLQYGHIANIDDIIAGKKPATDLGVKALDDHTFEVTLSEPVPYFYKLLVHPSVSPVPKSAVEKFGDKWTQPANIVTNGAYKLKNWVVNERIVLERNPQYWDNAKTVINQVTYLPISSEVTDVNRYRSGEIDMTYNNMPIELFQKLKKEIPNEVRVDPYLCTYYYEINNQKAPFNDVRVRTALKLALDRDIIVNKVKNQGDLPAYSYTPPYTDGAKLVEPEWFKWSQQKRNEEAKKLLAEAGFTADKPLTFDLLYNTSDLHKKLAIAVASIWKKNLGVNVNLENQEWKTFLDTRHQGTFDVARAGWCADYNEPTSFLNTMLSDSSNNTAHYKSPAFDKLIADTLKVADDTQRSELYAKAEQQLDKDSAIVPVYYYVNARLVKPWVGGYTGKDPLDNIYVKNLYIIKH.

Positions 1–26 are cleaved as a signal peptide; it reads MSNITKKSLIAAGILTALIAASAATA. Cys297 and Cys443 form a disulfide bridge.

This sequence belongs to the bacterial solute-binding protein 5 family. In terms of assembly, the complex is composed of two ATP-binding proteins (OppD and OppF), two transmembrane proteins (OppB and OppC) and a solute-binding protein (OppA).

The protein localises to the periplasm. Functionally, part of the ABC transporter complex OppABCDF involved in the uptake of oligopeptides, including the cell wall murein tripeptide L-alanyl-gamma-D-glutamyl-meso-diaminopimelate. Plays an important nutritional role and is involved in the recycling of cell wall peptides. Binds peptides containing from two to five amino acid residues regardless of their sequence. Also binds cell wall peptides, such as L-alanyl-gamma-D-glutamyl-meso-diaminopimelate. This is Periplasmic oligopeptide-binding protein OppA from Salmonella typhimurium (strain LT2 / SGSC1412 / ATCC 700720).